A 426-amino-acid polypeptide reads, in one-letter code: Putative 3-oxoacyl-[acyl-carrier-protein] synthase, mitochondrial (426 aa).

A mitochondrion-targeting transit peptide spans 1–18 (MKRVVITGLGAVTPLGNG). A Ketosynthase family 3 (KS3) domain is found at 19-423 (VKTNWRNLIQ…GTNASLCFKK (405 aa)). Catalysis depends on for beta-ketoacyl synthase activity residues Cys170, His311, and His351.

The protein belongs to the thiolase-like superfamily. Beta-ketoacyl-ACP synthases family.

The protein localises to the mitochondrion. The catalysed reaction is a fatty acyl-[ACP] + malonyl-[ACP] + H(+) = a 3-oxoacyl-[ACP] + holo-[ACP] + CO2. It catalyses the reaction butanoyl-[ACP] + malonyl-[ACP] + H(+) = 3-oxohexanoyl-[ACP] + holo-[ACP] + CO2. The enzyme catalyses hexanoyl-[ACP] + malonyl-[ACP] + H(+) = 3-oxooctanoyl-[ACP] + holo-[ACP] + CO2. It carries out the reaction octanoyl-[ACP] + malonyl-[ACP] + H(+) = 3-oxodecanoyl-[ACP] + holo-[ACP] + CO2. The catalysed reaction is decanoyl-[ACP] + malonyl-[ACP] + H(+) = 3-oxododecanoyl-[ACP] + holo-[ACP] + CO2. It catalyses the reaction dodecanoyl-[ACP] + malonyl-[ACP] + H(+) = 3-oxotetradecanoyl-[ACP] + holo-[ACP] + CO2. The enzyme catalyses tetradecanoyl-[ACP] + malonyl-[ACP] + H(+) = 3-oxohexadecanoyl-[ACP] + holo-[ACP] + CO2. The protein operates within lipid metabolism; fatty acid biosynthesis. Its function is as follows. May play a role in the biosynthesis of lipoic acid as well as longer chain fatty acids required for optimal mitochondrial function. The polypeptide is Putative 3-oxoacyl-[acyl-carrier-protein] synthase, mitochondrial (Schizosaccharomyces pombe (strain 972 / ATCC 24843) (Fission yeast)).